Here is a 595-residue protein sequence, read N- to C-terminus: Anthranilate synthase alpha subunit 1, chloroplastic (595 aa).

A chloroplast-targeting transit peptide spans 1–54 (MSSSMNVATMQALTFSRRLLPSVASRYLSSSSVTVTGYSGRSSAYAPSFRSIKC). At Val55 the chain carries N-acetylvaline. L-tryptophan is bound by residues Ser115 and 356 to 358 (PYM). 391-392 (GT) provides a ligand contact to chorismate. Mg(2+) is bound at residue Glu418. Chorismate contacts are provided by residues Tyr506, Arg526, 558–560 (GAG), and Gly560. Glu573 contributes to the Mg(2+) binding site.

It belongs to the anthranilate synthase component I family. As to quaternary structure, heterotetramer consisting of two non-identical subunits: a beta subunit and a large alpha subunit. Mg(2+) is required as a cofactor. Expressed in the central cylinder of mature primary root zones, including pericycle and early lateral root primordia, and vasculature of cotyledons.

The protein localises to the plastid. It localises to the chloroplast. The catalysed reaction is chorismate + L-glutamine = anthranilate + pyruvate + L-glutamate + H(+). Its pathway is amino-acid biosynthesis; L-tryptophan biosynthesis; L-tryptophan from chorismate: step 1/5. Feedback inhibition by tryptophan. Its function is as follows. Part of a heterotetrameric complex that catalyzes the two-step biosynthesis of anthranilate, an intermediate in the biosynthesis of L-tryptophan. In the first step, the glutamine-binding beta subunit of anthranilate synthase (AS) provides the glutamine amidotransferase activity which generates ammonia as a substrate that, along with chorismate, is used in the second step, catalyzed by the large alpha subunit of AS to produce anthranilate. Plays an important regulatory role in auxin production via the tryptophan-dependent biosynthetic pathway. In Arabidopsis thaliana (Mouse-ear cress), this protein is Anthranilate synthase alpha subunit 1, chloroplastic (ASA1).